Reading from the N-terminus, the 169-residue chain is uncharacterized protein (169 aa).

Residues 35–163 enclose the Nudix hydrolase domain; that stretch reads LIGRGTFILL…PYCPDSLQAL (129 aa). Residues 81 to 103 carry the Nudix box motif; it reads YADSAARELEEELGIRDAVLREH. Glu88 and Glu92 together coordinate Mg(2+).

It belongs to the Nudix hydrolase family. Mg(2+) is required as a cofactor.

This is an uncharacterized protein from Pseudomonas aeruginosa (strain ATCC 15692 / DSM 22644 / CIP 104116 / JCM 14847 / LMG 12228 / 1C / PRS 101 / PAO1).